The following is a 376-amino-acid chain: Pyrimidine monooxygenase RutA (376 aa).

Residues 61 to 62, N127, E136, 152 to 153, and S202 each bind FMN; these read IK and RY.

Belongs to the NtaA/SnaA/DszA monooxygenase family. RutA subfamily.

It catalyses the reaction uracil + FMNH2 + NADH + O2 = (Z)-3-ureidoacrylate + FMN + NAD(+) + H2O + H(+). The catalysed reaction is thymine + FMNH2 + NADH + O2 = (Z)-2-methylureidoacrylate + FMN + NAD(+) + H2O + H(+). Functionally, catalyzes the pyrimidine ring opening between N-3 and C-4 by an unusual flavin hydroperoxide-catalyzed mechanism, adding oxygen atoms in the process to yield ureidoacrylate peracid, that immediately reacts with FMN forming ureidoacrylate and FMN-N(5)-oxide. The FMN-N(5)-oxide reacts spontaneously with NADH to produce FMN. Requires the flavin reductase RutF to regenerate FMN in vivo. This is Pyrimidine monooxygenase RutA from Methylorubrum populi (strain ATCC BAA-705 / NCIMB 13946 / BJ001) (Methylobacterium populi).